The primary structure comprises 218 residues: Pyridoxine/pyridoxamine 5'-phosphate oxidase (218 aa).

FMN is bound by residues 66 to 71 (RVVLLK), arginine 87, lysine 88, and glutamine 110. Lysine 71 is a binding site for substrate. Substrate-binding residues include tyrosine 128, arginine 132, and serine 136. FMN-binding positions include 145–146 (QS) and tryptophan 190. Residue 196–198 (RLH) participates in substrate binding. Arginine 200 contributes to the FMN binding site.

This sequence belongs to the pyridoxamine 5'-phosphate oxidase family. In terms of assembly, homodimer. FMN is required as a cofactor.

It catalyses the reaction pyridoxamine 5'-phosphate + O2 + H2O = pyridoxal 5'-phosphate + H2O2 + NH4(+). The enzyme catalyses pyridoxine 5'-phosphate + O2 = pyridoxal 5'-phosphate + H2O2. Its pathway is cofactor metabolism; pyridoxal 5'-phosphate salvage; pyridoxal 5'-phosphate from pyridoxamine 5'-phosphate: step 1/1. It functions in the pathway cofactor metabolism; pyridoxal 5'-phosphate salvage; pyridoxal 5'-phosphate from pyridoxine 5'-phosphate: step 1/1. Functionally, catalyzes the oxidation of either pyridoxine 5'-phosphate (PNP) or pyridoxamine 5'-phosphate (PMP) into pyridoxal 5'-phosphate (PLP). The protein is Pyridoxine/pyridoxamine 5'-phosphate oxidase of Anaplasma marginale (strain St. Maries).